Consider the following 512-residue polypeptide: Maturase K (512 aa).

The protein belongs to the intron maturase 2 family. MatK subfamily.

The protein resides in the plastid. It is found in the chloroplast. Its function is as follows. Usually encoded in the trnK tRNA gene intron. Probably assists in splicing its own and other chloroplast group II introns. The polypeptide is Maturase K (Amorphophallus abyssinicus (Black arum)).